The chain runs to 159 residues: Crossover junction endodeoxyribonuclease RuvC (159 aa).

Active-site residues include Asp-7, Glu-66, and Asp-139. 3 residues coordinate Mg(2+): Asp-7, Glu-66, and Asp-139.

This sequence belongs to the RuvC family. In terms of assembly, homodimer which binds Holliday junction (HJ) DNA. The HJ becomes 2-fold symmetrical on binding to RuvC with unstacked arms; it has a different conformation from HJ DNA in complex with RuvA. In the full resolvosome a probable DNA-RuvA(4)-RuvB(12)-RuvC(2) complex forms which resolves the HJ. The cofactor is Mg(2+).

The protein resides in the cytoplasm. The catalysed reaction is Endonucleolytic cleavage at a junction such as a reciprocal single-stranded crossover between two homologous DNA duplexes (Holliday junction).. In terms of biological role, the RuvA-RuvB-RuvC complex processes Holliday junction (HJ) DNA during genetic recombination and DNA repair. Endonuclease that resolves HJ intermediates. Cleaves cruciform DNA by making single-stranded nicks across the HJ at symmetrical positions within the homologous arms, yielding a 5'-phosphate and a 3'-hydroxyl group; requires a central core of homology in the junction. The consensus cleavage sequence is 5'-(A/T)TT(C/G)-3'. Cleavage occurs on the 3'-side of the TT dinucleotide at the point of strand exchange. HJ branch migration catalyzed by RuvA-RuvB allows RuvC to scan DNA until it finds its consensus sequence, where it cleaves and resolves the cruciform DNA. The polypeptide is Crossover junction endodeoxyribonuclease RuvC (Sulfurovum sp. (strain NBC37-1)).